The chain runs to 123 residues: Small ribosomal subunit protein uS12cz/uS12cy (123 aa).

The protein belongs to the universal ribosomal protein uS12 family. In terms of assembly, part of the 30S ribosomal subunit.

The protein resides in the plastid. The protein localises to the chloroplast. Its function is as follows. With S4 and S5 plays an important role in translational accuracy. Located at the interface of the 30S and 50S subunits. The polypeptide is Small ribosomal subunit protein uS12cz/uS12cy (rps12-A) (Citrus sinensis (Sweet orange)).